Consider the following 297-residue polypeptide: Homoserine kinase (297 aa).

82-92 contacts ATP; it reads PVSRGLGSSAA.

The protein belongs to the GHMP kinase family. Homoserine kinase subfamily.

Its subcellular location is the cytoplasm. It catalyses the reaction L-homoserine + ATP = O-phospho-L-homoserine + ADP + H(+). Its pathway is amino-acid biosynthesis; L-threonine biosynthesis; L-threonine from L-aspartate: step 4/5. Catalyzes the ATP-dependent phosphorylation of L-homoserine to L-homoserine phosphate. The polypeptide is Homoserine kinase (Clostridium botulinum (strain ATCC 19397 / Type A)).